The primary structure comprises 358 residues: RuBisCO accumulation factor 1 (358 aa).

The segment at 11-194 (VSAAEAAELI…RQAIEKLLTD (184 aa)) is N-terminal alpha-helix. Residues 218–344 (ARLIPVAGTF…VVLVLRPKKI (127 aa)) form a C-terminal beta-sheet region.

Belongs to the RAF family. As to quaternary structure, homodimer. Forms an RbcL(8)-Raf1(8) complex. Forms complexes of many stoichiometries with RbcL with and without RbcS. RbcX and Raf1 can bind simultaneously to RbcL. Interacts with both RuBisCO subunits (ccbL, ccbS), GroEL, DnaK and alpha and beta phycocyanin (cpcA, cpcB) in pull-down experiments with tagged protein. C-terminally tagged Raf1 does not interact with either RuBisCO subunit, suggesting its C-terminus is involved in binding.

It is found in the cytoplasm. A major RuBisCO chaperone. Acts after GroEL-GroES chaperonin to fold and/or assemble the large subunit of RuBisCO (ccbL, rbcL). Cooperates with RbcX in RbcL folding, plays the major role in assembly of dimers into RbcL(8)-Raf1(8) intermediate complexes. RbcS replaces Raf1, leading to holoenzyme formation. Its function is as follows. Required for optimal reconstitution of RbcL(8) upon expression in E.coli. Has been suggested to be involved in RuBisCO recycling and homeostasis rather than assembly. The protein is RuBisCO accumulation factor 1 of Synechocystis sp. (strain ATCC 27184 / PCC 6803 / Kazusa).